The chain runs to 227 residues: MAHPVQLGLQDATSPVMEELITFHDYALMTISLISFLVLYALFSTLTTKLTNTNITDAQEMETTWTILPAVILILIALPSLRILYLTDEINNPSFTIKSIGHQWYWTYEYTDYGGLIFNSYMLPPLFLNPGDLRLLEVDNRVVLPIEAPVRMMITSQDVLHSWTIPTLGLKTDAVPGRLNQTTFTATRPGVYYGQCSEICGANHSFMPIVAELIPLKIFEMGPVFTL.

Residues 1-14 (MAHPVQLGLQDATS) are Mitochondrial intermembrane-facing. The chain crosses the membrane as a helical span at residues 15 to 45 (PVMEELITFHDYALMTISLISFLVLYALFST). Residues 46–59 (LTTKLTNTNITDAQ) are Mitochondrial matrix-facing. The chain crosses the membrane as a helical span at residues 60 to 87 (EMETTWTILPAVILILIALPSLRILYLT). The Mitochondrial intermembrane portion of the chain corresponds to 88-227 (DEINNPSFTI…IFEMGPVFTL (140 aa)). Cu cation contacts are provided by His161, Cys196, Glu198, Cys200, His204, and Met207. A Mg(2+)-binding site is contributed by Glu198.

This sequence belongs to the cytochrome c oxidase subunit 2 family. In terms of assembly, component of the cytochrome c oxidase (complex IV, CIV), a multisubunit enzyme composed of 14 subunits. The complex is composed of a catalytic core of 3 subunits MT-CO1, MT-CO2 and MT-CO3, encoded in the mitochondrial DNA, and 11 supernumerary subunits COX4I, COX5A, COX5B, COX6A, COX6B, COX6C, COX7A, COX7B, COX7C, COX8 and NDUFA4, which are encoded in the nuclear genome. The complex exists as a monomer or a dimer and forms supercomplexes (SCs) in the inner mitochondrial membrane with NADH-ubiquinone oxidoreductase (complex I, CI) and ubiquinol-cytochrome c oxidoreductase (cytochrome b-c1 complex, complex III, CIII), resulting in different assemblies (supercomplex SCI(1)III(2)IV(1) and megacomplex MCI(2)III(2)IV(2)). Found in a complex with TMEM177, COA6, COX18, COX20, SCO1 and SCO2. Interacts with TMEM177 in a COX20-dependent manner. Interacts with COX20. Interacts with COX16. It depends on Cu cation as a cofactor.

Its subcellular location is the mitochondrion inner membrane. It carries out the reaction 4 Fe(II)-[cytochrome c] + O2 + 8 H(+)(in) = 4 Fe(III)-[cytochrome c] + 2 H2O + 4 H(+)(out). Its function is as follows. Component of the cytochrome c oxidase, the last enzyme in the mitochondrial electron transport chain which drives oxidative phosphorylation. The respiratory chain contains 3 multisubunit complexes succinate dehydrogenase (complex II, CII), ubiquinol-cytochrome c oxidoreductase (cytochrome b-c1 complex, complex III, CIII) and cytochrome c oxidase (complex IV, CIV), that cooperate to transfer electrons derived from NADH and succinate to molecular oxygen, creating an electrochemical gradient over the inner membrane that drives transmembrane transport and the ATP synthase. Cytochrome c oxidase is the component of the respiratory chain that catalyzes the reduction of oxygen to water. Electrons originating from reduced cytochrome c in the intermembrane space (IMS) are transferred via the dinuclear copper A center (CU(A)) of subunit 2 and heme A of subunit 1 to the active site in subunit 1, a binuclear center (BNC) formed by heme A3 and copper B (CU(B)). The BNC reduces molecular oxygen to 2 water molecules using 4 electrons from cytochrome c in the IMS and 4 protons from the mitochondrial matrix. This chain is Cytochrome c oxidase subunit 2 (MT-CO2), found in Chlorocebus aethiops (Green monkey).